We begin with the raw amino-acid sequence, 226 residues long: MNENLFASFATPTMMGLPIVILIVLFPSILFPSPDRLINNRLASIQQWLIQLTSKQMLSIHNRKGQTWALMLISLILFIGSTNLLGLLPHSFTPTTQLSMNLGMAIPLWAGTVITGFRHKTKASLAHFLPQGTPLPLIPMLVIIETISLFIQPMALAVRLTANITAGHLLIHLIGGATLALMDISTATAFITFTILILLTILEFAVALIQAYVFTLLVSLYLHDNT.

A run of 6 helical transmembrane segments spans residues 12 to 32 (PTMMGLPIVILIVLFPSILFP), 68 to 88 (WALMLISLILFIGSTNLLGLL), 97 to 117 (QLSMNLGMAIPLWAGTVITGF), 138 to 158 (IPMLVIIETISLFIQPMALAV), 164 to 184 (ITAGHLLIHLIGGATLALMDI), and 189 to 209 (AFITFTILILLTILEFAVALI).

This sequence belongs to the ATPase A chain family. In terms of assembly, component of the ATP synthase complex composed at least of ATP5F1A/subunit alpha, ATP5F1B/subunit beta, ATP5MC1/subunit c (homooctomer), MT-ATP6/subunit a, MT-ATP8/subunit 8, ATP5ME/subunit e, ATP5MF/subunit f, ATP5MG/subunit g, ATP5MK/subunit k, ATP5MJ/subunit j, ATP5F1C/subunit gamma, ATP5F1D/subunit delta, ATP5F1E/subunit epsilon, ATP5PF/subunit F6, ATP5PB/subunit b, ATP5PD/subunit d, ATP5PO/subunit OSCP. ATP synthase complex consists of a soluble F(1) head domain (subunits alpha(3) and beta(3)) - the catalytic core - and a membrane F(0) domain - the membrane proton channel (subunits c, a, 8, e, f, g, k and j). These two domains are linked by a central stalk (subunits gamma, delta, and epsilon) rotating inside the F1 region and a stationary peripheral stalk (subunits F6, b, d, and OSCP). Interacts with DNAJC30; interaction is direct.

The protein localises to the mitochondrion inner membrane. The enzyme catalyses H(+)(in) = H(+)(out). In terms of biological role, subunit a, of the mitochondrial membrane ATP synthase complex (F(1)F(0) ATP synthase or Complex V) that produces ATP from ADP in the presence of a proton gradient across the membrane which is generated by electron transport complexes of the respiratory chain. ATP synthase complex consist of a soluble F(1) head domain - the catalytic core - and a membrane F(1) domain - the membrane proton channel. These two domains are linked by a central stalk rotating inside the F(1) region and a stationary peripheral stalk. During catalysis, ATP synthesis in the catalytic domain of F(1) is coupled via a rotary mechanism of the central stalk subunits to proton translocation. With the subunit c (ATP5MC1), forms the proton-conducting channel in the F(0) domain, that contains two crucial half-channels (inlet and outlet) that facilitate proton movement from the mitochondrial intermembrane space (IMS) into the matrix. Protons are taken up via the inlet half-channel and released through the outlet half-channel, following a Grotthuss mechanism. This Phoca vitulina (Harbor seal) protein is ATP synthase F(0) complex subunit a.